A 64-amino-acid chain; its full sequence is Leader peptide SpeFL (64 aa).

The Ornithine recognition loop motif lies at 32–38; that stretch reads HIRRTRH. Arg-35 is an L-ornithine binding site.

This sequence belongs to the speF operon leader peptide family. Binds ornithine in stalled 70S ribosomes, blocking the upper two-thirds of the exit tunnel. Contacts 23S rRNA and ribosomal proteins L4 and L22.

A small protein (arrest peptide) encoded upstream of inducible ornithine carboxylase gene (speF) that controls expression of downstream genes (usually speF and potE) by transcriptional and translational attenuation. In Haemophilus influenzae (strain ATCC 51907 / DSM 11121 / KW20 / Rd), this protein is Leader peptide SpeFL.